The sequence spans 114 residues: Large ribosomal subunit protein uL18 (114 aa).

Belongs to the universal ribosomal protein uL18 family. As to quaternary structure, part of the 50S ribosomal subunit; part of the 5S rRNA/L5/L18/L25 subcomplex. Contacts the 5S and 23S rRNAs.

In terms of biological role, this is one of the proteins that bind and probably mediate the attachment of the 5S RNA into the large ribosomal subunit, where it forms part of the central protuberance. In Porphyromonas gingivalis (strain ATCC BAA-308 / W83), this protein is Large ribosomal subunit protein uL18.